We begin with the raw amino-acid sequence, 610 residues long: UvrABC system protein C (610 aa).

Residues Ser16 to Val94 enclose the GIY-YIG domain. One can recognise a UVR domain in the interval Asp204–Val239.

This sequence belongs to the UvrC family. In terms of assembly, interacts with UvrB in an incision complex.

Its subcellular location is the cytoplasm. Its function is as follows. The UvrABC repair system catalyzes the recognition and processing of DNA lesions. UvrC both incises the 5' and 3' sides of the lesion. The N-terminal half is responsible for the 3' incision and the C-terminal half is responsible for the 5' incision. This chain is UvrABC system protein C, found in Escherichia coli O139:H28 (strain E24377A / ETEC).